The following is a 391-amino-acid chain: 3-ketoacyl-CoA thiolase (391 aa).

Residue Cys-95 is the Acyl-thioester intermediate of the active site. Active-site proton acceptor residues include His-347 and Cys-377.

Belongs to the thiolase-like superfamily. Thiolase family. As to quaternary structure, heterotetramer of two alpha chains (FadB) and two beta chains (FadA).

Its subcellular location is the cytoplasm. The catalysed reaction is an acyl-CoA + acetyl-CoA = a 3-oxoacyl-CoA + CoA. It functions in the pathway lipid metabolism; fatty acid beta-oxidation. Its function is as follows. Catalyzes the final step of fatty acid oxidation in which acetyl-CoA is released and the CoA ester of a fatty acid two carbons shorter is formed. The protein is 3-ketoacyl-CoA thiolase of Pseudomonas aeruginosa (strain UCBPP-PA14).